The sequence spans 846 residues: DNA mismatch repair protein MutS (846 aa).

610–617 (GPNMGGKS) is a binding site for ATP.

It belongs to the DNA mismatch repair MutS family.

In terms of biological role, this protein is involved in the repair of mismatches in DNA. It is possible that it carries out the mismatch recognition step. This protein has a weak ATPase activity. The sequence is that of DNA mismatch repair protein MutS from Legionella pneumophila (strain Paris).